The chain runs to 150 residues: Large ribosomal subunit protein bL9 (150 aa).

It belongs to the bacterial ribosomal protein bL9 family.

Binds to the 23S rRNA. In Clavibacter sepedonicus (Clavibacter michiganensis subsp. sepedonicus), this protein is Large ribosomal subunit protein bL9.